A 188-amino-acid polypeptide reads, in one-letter code: Elongation factor P (188 aa).

This sequence belongs to the elongation factor P family.

It is found in the cytoplasm. It participates in protein biosynthesis; polypeptide chain elongation. Involved in peptide bond synthesis. Stimulates efficient translation and peptide-bond synthesis on native or reconstituted 70S ribosomes in vitro. Probably functions indirectly by altering the affinity of the ribosome for aminoacyl-tRNA, thus increasing their reactivity as acceptors for peptidyl transferase. The sequence is that of Elongation factor P from Ralstonia nicotianae (strain ATCC BAA-1114 / GMI1000) (Ralstonia solanacearum).